We begin with the raw amino-acid sequence, 446 residues long: Light-independent protochlorophyllide reductase subunit N (446 aa).

[4Fe-4S] cluster-binding residues include Cys22, Cys47, and Cys107.

Belongs to the BchN/ChlN family. As to quaternary structure, protochlorophyllide reductase is composed of three subunits; ChlL, ChlN and ChlB. Forms a heterotetramer of two ChlB and two ChlN subunits. [4Fe-4S] cluster serves as cofactor.

Its subcellular location is the plastid. It is found in the chloroplast. The catalysed reaction is chlorophyllide a + oxidized 2[4Fe-4S]-[ferredoxin] + 2 ADP + 2 phosphate = protochlorophyllide a + reduced 2[4Fe-4S]-[ferredoxin] + 2 ATP + 2 H2O. Its pathway is porphyrin-containing compound metabolism; chlorophyll biosynthesis (light-independent). Component of the dark-operative protochlorophyllide reductase (DPOR) that uses Mg-ATP and reduced ferredoxin to reduce ring D of protochlorophyllide (Pchlide) to form chlorophyllide a (Chlide). This reaction is light-independent. The NB-protein (ChlN-ChlB) is the catalytic component of the complex. The sequence is that of Light-independent protochlorophyllide reductase subunit N from Mesostigma viride (Green alga).